The chain runs to 454 residues: Alpha-1,3-mannosyl-glycoprotein 4-beta-N-acetylglucosaminyltransferase C (454 aa).

At 1–6 the chain is on the cytoplasmic side; sequence MRCHLK. The chain crosses the membrane as a helical; Signal-anchor for type II membrane protein span at residues 7 to 24; that stretch reads KWVVVAAGLSILTSLYVY. The Lumenal portion of the chain corresponds to 25-454; that stretch reads MQRAQSGNLK…VWTVKEDKTI (430 aa). 2 N-linked (GlcNAc...) asparagine glycosylation sites follow: Asn58 and Asn189.

It belongs to the glycosyltransferase 54 family. The cofactor is a divalent metal cation.

It is found in the golgi apparatus membrane. The enzyme catalyses N(4)-{beta-D-GlcNAc-(1-&gt;2)-alpha-D-Man-(1-&gt;3)-[beta-D-GlcNAc-(1-&gt;2)-alpha-D-Man-(1-&gt;6)]-beta-D-Man-(1-&gt;4)-beta-D-GlcNAc-(1-&gt;4)-beta-D-GlcNAc}-L-asparaginyl-[protein] + UDP-N-acetyl-alpha-D-glucosamine = N(4)-{beta-D-GlcNAc-(1-&gt;2)-[beta-D-GlcNAc-(1-&gt;4)]-alpha-D-Man-(1-&gt;3)-[beta-D-GlcNAc-(1-&gt;2)-alpha-D-Man-(1-&gt;6)]-beta-D-Man-(1-&gt;4)-beta-D-GlcNAc-(1-&gt;4)-beta-D-GlcNAc}-L-asparaginyl-[protein] + UDP + H(+). It participates in protein modification; protein glycosylation. Glycosyltransferase that participates in the transfer of N-acetylglucosamine (GlcNAc) to the core mannose residues of N-linked glycans. Catalyzes the formation of the GlcNAcbeta1-4 branch on the GlcNAcbeta1-2Manalpha1-3 arm of the core structure of N-linked glycans. The protein is Alpha-1,3-mannosyl-glycoprotein 4-beta-N-acetylglucosaminyltransferase C (mgat4c) of Danio rerio (Zebrafish).